Here is a 596-residue protein sequence, read N- to C-terminus: MHCLVILGFLLGSLVAFSWAGVTTQPPPLIRTLSAGGDIGPQFDVGKTKEPEDAEFWHNVGLRQLEKTIKQAQRVKEDSYQKKARNIIIFIGDGMGISTISAGRIYKGQYLKHGYGEEETLVFDDFPNTGMAKTYNVDKQVPDSAGTATAIFSGSKTHYGAIGMDATRSKKNGQQGRVQSVMEWAQKEGKRTGVVTTTRITHATPAATYAHIYDRDWECDTEVPAESVGFHVDIARQLVENAPGNRFNVILGGGMSPMGILNASEVKTTIFEGPTETICTRGDNRNLPAEWLAHHANDTVPPALVHNRKDLLNVNVKKVDHLMGLFRNNHITYSIAREAGEPSLQEMTETALGILERGDESNGFVLLVEGGRIDQGHHMNYARAALHELYEFDLAIQAAVNNTDPDETLILVTADHSHAVTFNGYALRGADILGTANSHEKNDPMFYETISYANGPGYWDHLANDSRPQNSSNMWMPLKHFTAEERAAPTYRHLATVPRKDETHGGEDVAVFAYGPGSSLIRGVFEQNYLAYVMSYAGCLGPAKDFDDSCEDHKDGQKDRPLDKPNPKRNGATVVGASLIPILTAATAAILRGRGL.

An N-terminal signal peptide occupies residues 1–20 (MHCLVILGFLLGSLVAFSWA). D93 contacts Mg(2+). A Zn(2+)-binding site is contributed by D93. The active-site Phosphoserine intermediate is the S144. The Mg(2+) site is built by H202 and T204. N262 and N297 each carry an N-linked (GlcNAc...) asparagine glycan. Mg(2+) is bound at residue E369. Zn(2+)-binding residues include D374 and H378. N401 is a glycosylation site (N-linked (GlcNAc...) asparagine). D415 and H416 together coordinate Zn(2+). N-linked (GlcNAc...) asparagine glycosylation is found at N464 and N470. H504 serves as a coordination point for Zn(2+). Residues C539 and C550 are joined by a disulfide bond. Positions 548-566 (DSCEDHKDGQKDRPLDKPN) are enriched in basic and acidic residues. The segment at 548–570 (DSCEDHKDGQKDRPLDKPNPKRN) is disordered. N570 carries GPI-anchor amidated asparagine lipidation. A helical transmembrane segment spans residues 571-591 (GATVVGASLIPILTAATAAIL). Positions 571–596 (GATVVGASLIPILTAATAAILRGRGL) are cleaved as a propeptide — removed in mature form.

The protein belongs to the alkaline phosphatase family. In terms of assembly, homodimer. Mg(2+) serves as cofactor. Requires Zn(2+) as cofactor. As to expression, ellipsoid body ring neurons in the adult brain and in the lower Malpighian tubule and ureter.

Its subcellular location is the cell membrane. The catalysed reaction is a phosphate monoester + H2O = an alcohol + phosphate. In terms of biological role, important role in neural and renal epithelial function. The sequence is that of Alkaline phosphatase 4 from Drosophila melanogaster (Fruit fly).